The primary structure comprises 303 residues: MTWLQNITKESKIWIVNYACAIDYYVDLNKQKNSVLIPGGKGINVAIVMKSLGFDPTVITFLGQPTKNLFLELVKPYDLNIVSFISETKTRINLKLLKDEKTTEINDLSPLITDANLTELLTFLKANVKNNDLVIINGRFKFEALEKVLNLVFTLTENVVIDVDESKMLTLLNQSKPLVMKPNIDEFQTMINTFFHDQQSLIAAIKKFHYCKLLLLSDGDKGAYLFDQNKLLFVSSITPKQVVSTTGAGDTLLAVFLANLILKVDLKTALIKATNYASATISKLGVVDSKDKISVITPKSYYL.

Residues 217-222 (SDGDKG) and 249-250 (GD) each bind ATP. Catalysis depends on Asp250, which acts as the Proton acceptor.

Belongs to the carbohydrate kinase PfkB family.

It carries out the reaction beta-D-fructose 1-phosphate + ATP = beta-D-fructose 1,6-bisphosphate + ADP + H(+). Functionally, catalyzes the ATP-dependent phosphorylation of fructose-l-phosphate to fructose-l,6-bisphosphate. This Mycoplasma genitalium (strain ATCC 33530 / DSM 19775 / NCTC 10195 / G37) (Mycoplasmoides genitalium) protein is Putative 1-phosphofructokinase (fruK).